We begin with the raw amino-acid sequence, 299 residues long: Probable lipid kinase YegS (299 aa).

Positions 2-133 constitute a DAGKc domain; sequence AEFPASLLIL…IDMAQVNKQT (132 aa). ATP-binding positions include T40, 66–72, and T95; that span reads GDGTINE. Mg(2+) is bound by residues L215, D218, and L220. E271 acts as the Proton acceptor in catalysis.

The protein belongs to the diacylglycerol/lipid kinase family. YegS lipid kinase subfamily. Mg(2+) is required as a cofactor. Requires Ca(2+) as cofactor.

It localises to the cytoplasm. Functionally, probably phosphorylates lipids; the in vivo substrate is unknown. This is Probable lipid kinase YegS from Shigella flexneri.